Here is a 120-residue protein sequence, read N- to C-terminus: Small ribosomal subunit protein uS13 (120 aa).

The tract at residues 92–120 is disordered; it reads HRKGLPVRGQTTKNNARTRKGKKKTVGSK. Residues 107-120 are compositionally biased toward basic residues; the sequence is ARTRKGKKKTVGSK.

Belongs to the universal ribosomal protein uS13 family. Part of the 30S ribosomal subunit. Forms a loose heterodimer with protein S19. Forms two bridges to the 50S subunit in the 70S ribosome.

Functionally, located at the top of the head of the 30S subunit, it contacts several helices of the 16S rRNA. In the 70S ribosome it contacts the 23S rRNA (bridge B1a) and protein L5 of the 50S subunit (bridge B1b), connecting the 2 subunits; these bridges are implicated in subunit movement. Contacts the tRNAs in the A and P-sites. The chain is Small ribosomal subunit protein uS13 from Helicobacter pylori (strain J99 / ATCC 700824) (Campylobacter pylori J99).